The sequence spans 125 residues: Fluoride-specific ion channel FluC (125 aa).

Helical transmembrane passes span 5–25 (ILAI…LALW), 37–57 (LAAN…FHLL), 71–91 (GFLG…TMLL), and 97–117 (VALL…WLGI). The Na(+) site is built by Gly-74 and Thr-77.

This sequence belongs to the fluoride channel Fluc/FEX (TC 1.A.43) family.

It localises to the cell inner membrane. It carries out the reaction fluoride(in) = fluoride(out). Its activity is regulated as follows. Na(+) is not transported, but it plays an essential structural role and its presence is essential for fluoride channel function. In terms of biological role, fluoride-specific ion channel. Important for reducing fluoride concentration in the cell, thus reducing its toxicity. This Variovorax paradoxus (strain S110) protein is Fluoride-specific ion channel FluC.